A 114-amino-acid chain; its full sequence is Notch-regulated ankyrin repeat-containing protein (114 aa).

2 ANK repeats span residues 50–79 (EGQT…DIRL) and 83–112 (DGWS…YAAS).

The protein belongs to the NRARP family. As to quaternary structure, interacts with LEF1.

In terms of biological role, downstream effector of Notch signaling. Involved in the regulation of liver cancer cells self-renewal. Involved in angiogenesis acting downstream of Notch at branch points to regulate vascular density. Proposed to integrate endothelial Notch and Wnt signaling to control stalk cell proliferation and to stablilize new endothelial connections during angiogenesis. During somitogenesis involved in maintenance of proper somite segmentation and proper numbers of somites and vertebrae. Required for proper anterior-posterior somite patterning. Proposed to function in a negative feedback loop to destabilize Notch 1 intracellular domain (NICD) and down-regulate the Notch signal, preventing expansion of the Notch signal into the anterior somite domain. In Homo sapiens (Human), this protein is Notch-regulated ankyrin repeat-containing protein (NRARP).